A 138-amino-acid polypeptide reads, in one-letter code: Putative pre-16S rRNA nuclease (138 aa).

The protein belongs to the YqgF nuclease family.

The protein localises to the cytoplasm. Its function is as follows. Could be a nuclease involved in processing of the 5'-end of pre-16S rRNA. This Salmonella arizonae (strain ATCC BAA-731 / CDC346-86 / RSK2980) protein is Putative pre-16S rRNA nuclease.